The chain runs to 79 residues: ESX secretion system protein YukD (79 aa).

The protein belongs to the EsaB family.

In terms of biological role, required for YukE secretion. Probable component or regulator of the ESX/ESAT-6-like secretion system (BsEss). The sequence is that of ESX secretion system protein YukD (yukD) from Bacillus subtilis (strain 168).